The primary structure comprises 346 residues: fMet-Leu-Phe receptor (346 aa).

Asparagine 1 and asparagine 7 each carry an N-linked (GlcNAc...) asparagine glycan. Over asparagine 1 to isoleucine 24 the chain is Extracellular. The helical transmembrane segment at isoleucine 25–valine 47 threads the bilayer. Topologically, residues alanine 48–threonine 58 are cytoplasmic. A helical transmembrane segment spans residues isoleucine 59 to valine 80. The Extracellular segment spans residues arginine 81–phenylalanine 97. A disulfide bond links cysteine 95 and cysteine 173. The helical transmembrane segment at isoleucine 98–leucine 118 threads the bilayer. Residues aspartate 119–serine 137 are Cytoplasmic-facing. The helical transmembrane segment at leucine 138 to isoleucine 159 threads the bilayer. Over arginine 160 to arginine 202 the chain is Extracellular. A helical membrane pass occupies residues phenylalanine 203–threonine 223. The Cytoplasmic portion of the chain corresponds to lysine 224–valine 239. The chain crosses the membrane as a helical span at residues leucine 240–valine 263. Residues arginine 264–valine 282 are Extracellular-facing. The helical transmembrane segment at threonine 283–glycine 302 threads the bilayer. Topologically, residues glutamine 303–alanine 346 are cytoplasmic. Residues alanine 324–proline 338 show a composition bias toward polar residues. The disordered stretch occupies residues alanine 324–alanine 346.

This sequence belongs to the G-protein coupled receptor 1 family. Post-translationally, phosphorylated; which is necessary for desensitization.

The protein resides in the cell membrane. In terms of biological role, high affinity receptor for N-formyl-methionyl peptides (fMLP), which are powerful neutrophil chemotactic factors. Binding of fMLP to the receptor stimulates intracellular calcium mobilization and superoxide anion release. This response is mediated via a G-protein that activates a phosphatidylinositol-calcium second messenger system. Receptor for TAFA4, mediates its effects on chemoattracting macrophages, promoting phagocytosis and increasing ROS release. Receptor for cathepsin CTSG, leading to increased phagocyte chemotaxis. This is fMet-Leu-Phe receptor (FPR1) from Pongo pygmaeus (Bornean orangutan).